Here is a 139-residue protein sequence, read N- to C-terminus: Maintenance of telomere capping protein 7 (139 aa).

2 helical membrane-spanning segments follow: residues 13–33 (SHHVLFAEPGFFLCNFFFVLL) and 42–62 (FYFLFILLFIIYIAIIYFVFI). The tract at residues 94 to 121 (RSVANPALPPQKKKKKKKKGTLRTGEVE) is disordered. Residues 104-114 (QKKKKKKKKGT) show a composition bias toward basic residues.

Its subcellular location is the membrane. Functionally, may be involved in telomere capping. This Saccharomyces cerevisiae (strain ATCC 204508 / S288c) (Baker's yeast) protein is Maintenance of telomere capping protein 7 (MTC7).